The chain runs to 503 residues: Annexin A11 (503 aa).

Pro residues-rich tracts occupy residues 80-117 (GYPP…PGMP) and 123-167 (PGAP…PVPS). The tract at residues 80–172 (GYPPVPPGGF…QPVPSYPGYS (93 aa)) is disordered. Annexin repeat units follow at residues 198–269 (FDPL…ALMK), 270–341 (TPVL…SLSQ), 353–425 (SLVQ…AVVK), and 429–500 (NTPA…KICG). N6-acetyllysine occurs at positions 246 and 253. K477 is subject to N6-acetyllysine.

The protein belongs to the annexin family. Interacts with S100A6. Interacts with PDCD6 in a calcium-dependent manner. Interacts with KIF23 during cytokinesis.

The protein resides in the cytoplasm. Its subcellular location is the melanosome. It is found in the nucleus envelope. It localises to the nucleus. The protein localises to the nucleoplasm. The protein resides in the cytoskeleton. Its subcellular location is the spindle. Functionally, required for midbody formation and completion of the terminal phase of cytokinesis. Binds specifically to calcyclin in a calcium-dependent manner. The sequence is that of Annexin A11 (Anxa11) from Mus musculus (Mouse).